Reading from the N-terminus, the 111-residue chain is MLLLLLLLGPGSGLGAVVSQHPSRVICKSGTSVKIECRSLDFQATTMFWYRQFPKQSLMLMATSNEGSKATYEQGVEKDKFLINHASLTLSTLTVTSAHPEDSSFYICSAR.

The first 15 residues, 1–15 (MLLLLLLLGPGSGLG), serve as a signal peptide directing secretion. The Ig-like domain occupies 16-111 (AVVSQHPSRV…DSSFYICSAR (96 aa)). A disulfide bond links Cys37 and Cys108.

In terms of assembly, alpha-beta TR is a heterodimer composed of an alpha and beta chain; disulfide-linked. The alpha-beta TR is associated with the transmembrane signaling CD3 coreceptor proteins to form the TR-CD3 (TcR or TCR). The assembly of alpha-beta TR heterodimers with CD3 occurs in the endoplasmic reticulum where a single alpha-beta TR heterodimer associates with one CD3D-CD3E heterodimer, one CD3G-CD3E heterodimer and one CD247 homodimer forming a stable octameric structure. CD3D-CD3E and CD3G-CD3E heterodimers preferentially associate with TR alpha and TR beta chains, respectively. The association of the CD247 homodimer is the last step of TcR assembly in the endoplasmic reticulum and is required for transport to the cell surface.

It is found in the cell membrane. In terms of biological role, v region of the variable domain of T cell receptor (TR) beta chain that participates in the antigen recognition. Alpha-beta T cell receptors are antigen specific receptors which are essential to the immune response and are present on the cell surface of T lymphocytes. Recognize peptide-major histocompatibility (MH) (pMH) complexes that are displayed by antigen presenting cells (APC), a prerequisite for efficient T cell adaptive immunity against pathogens. Binding of alpha-beta TR to pMH complex initiates TR-CD3 clustering on the cell surface and intracellular activation of LCK that phosphorylates the ITAM motifs of CD3G, CD3D, CD3E and CD247 enabling the recruitment of ZAP70. In turn ZAP70 phosphorylates LAT, which recruits numerous signaling molecules to form the LAT signalosome. The LAT signalosome propagates signal branching to three major signaling pathways, the calcium, the mitogen-activated protein kinase (MAPK) kinase and the nuclear factor NF-kappa-B (NF-kB) pathways, leading to the mobilization of transcription factors that are critical for gene expression and essential for T cell growth and differentiation. The T cell repertoire is generated in the thymus, by V-(D)-J rearrangement. This repertoire is then shaped by intrathymic selection events to generate a peripheral T cell pool of self-MH restricted, non-autoaggressive T cells. Post-thymic interaction of alpha-beta TR with the pMH complexes shapes TR structural and functional avidity. The protein is T cell receptor beta variable 20-1 of Homo sapiens (Human).